The sequence spans 97 residues: MLIKQFSRRPKNMKVQILLAFAALFVLAVGSYASESKKLDLRDASFSAMFSADYQLNPQERGCRYFLGECKKTSECCEHLACHDKHKWCAWDWTIGK.

The N-terminal stretch at 1–33 (MLIKQFSRRPKNMKVQILLAFAALFVLAVGSYA) is a signal peptide. Positions 34–61 (SESKKLDLRDASFSAMFSADYQLNPQER) are excised as a propeptide. 3 cysteine pairs are disulfide-bonded: C63–C77, C70–C82, and C76–C89.

The protein belongs to the neurotoxin 10 (Hwtx-1) family. 12 (Hntx-12) subfamily. In terms of tissue distribution, expressed by the venom gland.

It localises to the secreted. Ion channel inhibitor. This chain is U6-theraphotoxin-Hhn1a 2, found in Cyriopagopus hainanus (Chinese bird spider).